The following is a 402-amino-acid chain: Coiled-coil domain-containing protein 188 (402 aa).

3 disordered regions span residues 1-30 (MEGL…GGGL), 50-74 (HSVQ…EGEA), and 108-131 (HPGS…PCPC). Residues 154 to 189 (GLLGSAEQSFLQLEQENHSLKRQNQELREQLGALLG) are a coiled coil. Residues 347 to 363 (LLLGALLVWTAAYVYVV) form a helical membrane-spanning segment.

Its subcellular location is the membrane. The polypeptide is Coiled-coil domain-containing protein 188 (Homo sapiens (Human)).